A 159-amino-acid polypeptide reads, in one-letter code: Peptide methionine sulfoxide reductase MsrB (159 aa).

One can recognise a MsrB domain in the interval 14–137; that stretch reads TEKLKENLTE…NSASLKFIAK (124 aa). Cys-126 functions as the Nucleophile in the catalytic mechanism.

This sequence belongs to the MsrB Met sulfoxide reductase family.

The enzyme catalyses L-methionyl-[protein] + [thioredoxin]-disulfide + H2O = L-methionyl-(R)-S-oxide-[protein] + [thioredoxin]-dithiol. This Hathewaya histolytica (Clostridium histolyticum) protein is Peptide methionine sulfoxide reductase MsrB.